Here is a 538-residue protein sequence, read N- to C-terminus: Growth factor receptor-bound protein 14 (538 aa).

A disordered region spans residues 1 to 73 (MTTSLQDGQS…KAKDLEVQET (73 aa)). At Thr2 the chain carries N-acetylthreonine. Residues 54–69 (ATRRGAMDRRKAKDLE) are compositionally biased toward basic and acidic residues. The Ras-associating domain maps to 104–190 (KKQVIKVYSE…NKLYLRKNYA (87 aa)). One can recognise a PH domain in the interval 232–340 (YPEIHGFLHA…WVTAIRLLKY (109 aa)). Phosphoserine is present on residues Ser370 and Ser373. One can recognise an SH2 domain in the interval 437–533 (WFHHRISRDE…VLPCKLKHYC (97 aa)).

The protein belongs to the GRB7/10/14 family. In terms of assembly, interacts with the cytoplasmic domain of the autophosphorylated insulin receptor, through the SH2 domain. Interacts with GRB14 (via BPS domain); this interaction protects the tyrosines in the activation loop on INSR from dephosphorylation. Binds to the ankyrin repeat region of TNKS2 via its N-terminus. Interacts with activated NRAS. Interacts (via SH2 domain) with TEK/TIE2 (tyrosine phosphorylated). Post-translationally, phosphorylated on serine residues. Phosphorylated on tyrosine residues by TEK/TIE2.

The protein resides in the cytoplasm. Its subcellular location is the endosome membrane. Functionally, adapter protein which modulates coupling of cell surface receptor kinases with specific signaling pathways. Binds to, and suppresses signals from, the activated insulin receptor (INSR). Potent inhibitor of insulin-stimulated MAPK3 phosphorylation. Plays a critical role regulating PDPK1 membrane translocation in response to insulin stimulation and serves as an adapter protein to recruit PDPK1 to activated insulin receptor, thus promoting PKB/AKT1 phosphorylation and transduction of the insulin signal. This is Growth factor receptor-bound protein 14 (Grb14) from Rattus norvegicus (Rat).